The primary structure comprises 252 residues: Trans-aconitate 2-methyltransferase (252 aa).

It belongs to the methyltransferase superfamily. Tam family.

It is found in the cytoplasm. The catalysed reaction is trans-aconitate + S-adenosyl-L-methionine = (E)-3-(methoxycarbonyl)pent-2-enedioate + S-adenosyl-L-homocysteine. Its function is as follows. Catalyzes the S-adenosylmethionine monomethyl esterification of trans-aconitate. In Escherichia coli (strain ATCC 8739 / DSM 1576 / NBRC 3972 / NCIMB 8545 / WDCM 00012 / Crooks), this protein is Trans-aconitate 2-methyltransferase.